The sequence spans 276 residues: Shikimate dehydrogenase (NADP(+)) (276 aa).

Residues 15–17 and Thr62 each bind shikimate; that span reads SKS. Lys66 (proton acceptor) is an active-site residue. Glu78 lines the NADP(+) pocket. Asn87 and Asp103 together coordinate shikimate. NADP(+) contacts are provided by residues 127–131, 150–155, and Met214; these read GAGGV and NRTHIK. Tyr216 lines the shikimate pocket. Position 239 (Gly239) interacts with NADP(+).

Belongs to the shikimate dehydrogenase family. As to quaternary structure, homodimer.

It carries out the reaction shikimate + NADP(+) = 3-dehydroshikimate + NADPH + H(+). It participates in metabolic intermediate biosynthesis; chorismate biosynthesis; chorismate from D-erythrose 4-phosphate and phosphoenolpyruvate: step 4/7. Its function is as follows. Involved in the biosynthesis of the chorismate, which leads to the biosynthesis of aromatic amino acids. Catalyzes the reversible NADPH linked reduction of 3-dehydroshikimate (DHSA) to yield shikimate (SA). This Haemophilus ducreyi (strain 35000HP / ATCC 700724) protein is Shikimate dehydrogenase (NADP(+)).